Consider the following 220-residue polypeptide: CRISPR system Cms endoribonuclease Csm3 (220 aa).

This sequence belongs to the CRISPR-associated Csm3 family. As to quaternary structure, part of the Csm effector complex that includes at least Cas10(1), Csm2(3), Csm3(5), Csm4(1), Csm5(1) and mature crRNA. The Csm complex is elongated and slightly twisted with a maximal length of 215 Angstroms and a diameter of 75-80 Angstroms. It has been modeled to have a central protein filamant of Csm3 subunits along which the dsRNA helix of paired crRNA and target RNA binds. The filament is capped at one end by Cas10 and Csm4 and at the other end by Csm5; ssDNA is thought to bind to the N-terminal HD domain of Cas10. Csm with a precursor crRNA does not include Csm5, while Cas6, the enzyme probably involved in pre-crRNA processing, is found associated with a subset of the Csm complex. Requires a metal cation as cofactor.

Its activity is regulated as follows. Target ssRNase is inhibited by EDTA. Functionally, CRISPR (clustered regularly interspaced short palindromic repeat) is an adaptive immune system that provides protection against mobile genetic elements (viruses, transposable elements and conjugative plasmids). CRISPR clusters contain spacers, sequences complementary to antecedent mobile elements, and target invading nucleic acids. CRISPR clusters are transcribed and processed into CRISPR RNA (crRNA). The type III-A Csm effector complex binds crRNA and acts as a crRNA-guided RNase, DNase and cyclic oligoadenylate synthase; binding of target RNA cognate to the crRNA is required for all activities. In a heterologous host this Csm effector complex restricts ssRNA phage MS2, suggesting it may target RNA viruses in vivo. Its function is as follows. Csm functions as a non-specific ssDNase. Base-pairing between crRNA and target RNA to form a ternary Csm complex activates a ssDNase activity; target RNA cleavage suppresses the ssDNase, a temporal control that prevents uncontrolled DNA degradation. Viral RNA transcripts probably tether the Csm complex to the viral genome, recruiting Cas10 ssDNA activity which is able to degrade DNA in the transcription bubble, spatially controlling the DNase activity. In terms of biological role, this subunit has the target ssRNA endonuclease activity; it cleaves multiple sites in the target RNA at 6 nucleotide intervals. The number of cleavage sites in the target RNA correlates with the number of Csm3 subunits in the Csm effector complex. In the Csm complex target RNA and ssDNA are cleaved simultaneously, although RNase activity (of Csm3) is much faster. RNA cleavage by Csm3 is not required for ssDNase activity as Csm complex with inactive Csm3 still has ssDNase activity; however as the cleaved target RNA products dissociate away ssDNase activity decreases. This chain is CRISPR system Cms endoribonuclease Csm3, found in Streptococcus thermophilus.